Reading from the N-terminus, the 299-residue chain is Endonuclease 4 (299 aa).

Positions 1–24 (MSSSLRQWFARVLVLTQLINGALC) are cleaved as a signal peptide. W25 and H30 together coordinate a divalent metal cation. A substrate-binding site is contributed by 25–30 (WGKEGH). C34 and C65 are disulfide-bonded. A divalent metal cation is bound by residues D69 and H84. Residues 69 to 75 (DEIKHHW), 84 to 87 (HYVD), and 94 to 99 (NYEYCR) contribute to the substrate site. Intrachain disulfides connect C93–C246, C101–C111, and C226–C233. Substrate is bound by residues N118 and Y136. N-linked (GlcNAc...) asparagine glycosylation occurs at N118. N-linked (GlcNAc...) asparagine glycosylation occurs at N137. H147, D151, H157, H181, and D185 together coordinate a divalent metal cation. The interval 147–196 (HFIGDIHQPLHVGFLGDEGGNTITVRWYRRKTNLHHVWDNMIIESALKTY) is substrate binding. Residues N198, N211, and N229 are each glycosylated (N-linked (GlcNAc...) asparagine). Positions 284-299 (ATLNRIFSSKPKHAGS) are cleaved as a propeptide — removed in mature form.

This sequence belongs to the nuclease type I family. As to quaternary structure, monomer. Mn(2+) serves as cofactor. It depends on Ca(2+) as a cofactor.

It catalyses the reaction Endonucleolytic cleavage to 5'-phosphomononucleotide and 5'-phosphooligonucleotide end-products.. In terms of biological role, endonuclease that can use single-stranded RNA and DNA as substrates. In contradiction with PubMed:23620482, cannot hydrolyze single-stranded DNA and does not cleave mismatches. The chain is Endonuclease 4 from Arabidopsis thaliana (Mouse-ear cress).